The following is a 472-amino-acid chain: Peptidoglycan endopeptidase RipA (472 aa).

The segment at residues 1–39 (MRRNRRGSPARPAARFVRPAIPSALSVALLVCTPGLATA) is a signal peptide (tat-type signal). In terms of domain architecture, NlpC/P60 spans 340 to 472 (RQASEYVIRR…TPYVVRYIEY (133 aa)). The active-site Nucleophile is Cys-383. Catalysis depends on His-432, which acts as the Proton acceptor. The active site involves Glu-444.

It belongs to the peptidase C40 family. In terms of assembly, monomer. Interacts with RpfB and PBP1A (ponA1) via residues 448-472 of RipA, interacts with RpfE. Interacts with the chaperone MoxR1. RipA-MoxR1 interaction in the cytoplasm leads to proper folding of RipA, resulting in its secretion. Also interacts with Mce2B. In terms of processing, exported by the Tat system. The position of the signal peptide cleavage has not been experimentally proven.

It localises to the secreted. With respect to regulation, moxR1-mediated folding is critical for secretion via the TAT system. The synergistic effects on peptidoglycan degradation of RipA plus RpfB are inhibited by addition of PBP1A (ponA1). Functionally, peptidoglycan endopeptidase that cleaves the bond between D-glutamate and meso-diaminopimelate. Binds and degrades high-molecular weight peptidoglycan from a number of Actinobacteria; activity is increased in the presence of RpfB and inhibited by PBP1A (ponA1). Required for normal separation of daughter cells after cell division and for cell wall integrity. Required for host cell invasion and intracellular survival in host macrophages. The sequence is that of Peptidoglycan endopeptidase RipA (ripA) from Mycobacterium tuberculosis (strain ATCC 25618 / H37Rv).